The sequence spans 430 residues: uncharacterized protein (430 aa).

This is an uncharacterized protein from Escherichia coli (strain K12).